Consider the following 368-residue polypeptide: Protein Wnt-1 (368 aa).

The first 25 residues, Met-1 to Ala-25, serve as a signal peptide directing secretion. Cystine bridges form between Cys-91-Cys-102, Cys-141-Cys-149, Cys-151-Cys-168, Cys-216-Cys-230, Cys-218-Cys-225, Cys-297-Cys-328, Cys-313-Cys-323, Cys-327-Cys-367, Cys-343-Cys-358, Cys-345-Cys-355, and Cys-350-Cys-351. Residue Ser-222 is the site of O-palmitoleoyl serine; by PORCN attachment.

The protein belongs to the Wnt family. As to quaternary structure, forms a soluble 1:1 complex with AFM; this prevents oligomerization and is required for prolonged biological activity. The complex with AFM may represent the physiological form in body fluids. Interacts with PORCN. In terms of processing, N-glycosylated. N-glycosylation favors subsequent palmitoleoylation. Palmitoleoylation is required for efficient binding to frizzled receptors. Palmitoleoylation is necessary for proper trafficking to cell surface. Depalmitoleoylated by NOTUM, leading to inhibit Wnt signaling pathway.

The protein resides in the secreted. It is found in the extracellular space. It localises to the extracellular matrix. In terms of biological role, ligand for members of the frizzled family of seven transmembrane receptors. Acts in the canonical Wnt signaling pathway by promoting beta-catenin-dependent transcriptional activation. Developmental protein that promotes cell proliferation in the developing spinal cord. Has a role in osteoblast function, bone development and bone homeostasis. The polypeptide is Protein Wnt-1 (WNT1) (Gallus gallus (Chicken)).